Consider the following 374-residue polypeptide: 5-methylthioribulose-1-phosphate isomerase (374 aa).

This sequence belongs to the RuBisCO large chain family. Type IV subfamily.

It carries out the reaction 5-(methylsulfanyl)-D-ribulose 1-phosphate = S-methyl-1-thio-D-xylulose 5-phosphate. The enzyme catalyses 5-(methylsulfanyl)-D-ribulose 1-phosphate = 1-(methylsulfanyl)ribulose 5-phosphate. It participates in amino-acid biosynthesis; L-methionine biosynthesis via salvage pathway. Its pathway is metabolic intermediate biosynthesis; 1-deoxy-D-xylulose 5-phosphate biosynthesis. Its function is as follows. Catalyzes the conversion of 5-methylthio-D-ribulose 1-phosphate (MTRu-1P) to a 3:1 mixture of 1-methylthioxylulose 5-phosphate (MTXu-5P) and 1-methylthioribulose 5-phosphate (MTRu-5P). Involved in the MTA-isoprenoid shunt of the methionine salvage pathway. This Rhodospirillum rubrum (strain ATCC 11170 / ATH 1.1.1 / DSM 467 / LMG 4362 / NCIMB 8255 / S1) protein is 5-methylthioribulose-1-phosphate isomerase.